The following is a 392-amino-acid chain: Nicotinate phosphoribosyltransferase (392 aa).

Position 216 is a phosphohistidine; by autocatalysis (His216).

This sequence belongs to the NAPRTase family. Post-translationally, transiently phosphorylated on a His residue during the reaction cycle. Phosphorylation strongly increases the affinity for substrates and increases the rate of nicotinate D-ribonucleotide production. Dephosphorylation regenerates the low-affinity form of the enzyme, leading to product release.

It catalyses the reaction nicotinate + 5-phospho-alpha-D-ribose 1-diphosphate + ATP + H2O = nicotinate beta-D-ribonucleotide + ADP + phosphate + diphosphate. It participates in cofactor biosynthesis; NAD(+) biosynthesis; nicotinate D-ribonucleotide from nicotinate: step 1/1. Its function is as follows. Catalyzes the synthesis of beta-nicotinate D-ribonucleotide from nicotinate and 5-phospho-D-ribose 1-phosphate at the expense of ATP. This chain is Nicotinate phosphoribosyltransferase, found in Cupriavidus necator (strain ATCC 17699 / DSM 428 / KCTC 22496 / NCIMB 10442 / H16 / Stanier 337) (Ralstonia eutropha).